We begin with the raw amino-acid sequence, 193 residues long: p53 apoptosis effector related to PMP-22 (193 aa).

4 helical membrane-spanning segments follow: residues 12–32 (RWIL…ALAG), 79–99 (AMLF…FFAL), 110–130 (VIGG…VIYP), and 151–171 (WAYG…FFFC).

The protein belongs to the TMEM47 family. (Microbial infection) Interacts with S.typhimurium sipA and sctB1/sipC. Expressed in skin, heart, placental, liver, pancreas, keratinocytes and dermal fibroblasts. May translocate to the intestinal apical epithelial cell surface via sipA and sctB1/sipC-promoted exocytic translocation following infection by S. Typhimurium.

It is found in the cell junction. It localises to the desmosome. The protein localises to the cell membrane. Its subcellular location is the cytoplasm. Component of intercellular desmosome junctions. Plays a role in stratified epithelial integrity and cell-cell adhesion by promoting desmosome assembly. Thereby plays a role in barrier function of the skin against infection. Plays a role in mammary epithelial tissue homeostasis and remodeling during and after pregnancy, potentially via its involvement in desmosome cell-cell junctions. Required for tooth enamel development via facilitating desmosome-mediated ameloblast adhesion to the stratum intermedium during the transitional stage of amelogenesis. May also play a role in downstream transcriptional regulation of other genes involved in amelogenesis such as AMBN, ENAM, MMP20 and KLK4. Plays a role as an effector in the TP53-dependent apoptotic pathway. Positively regulates apoptosis in T-helper 17 (Th17) cell populations via caspase-dependent signaling. Promotes neutrophil transepithelial migration in response to chemoattractants such as hepoxilin A3 (HXA3), N-Formylmethionyl-leucyl-phenylalanine (fMLP) and CXCL8/IL-8. Required for neutrophil transepithelial migration in response to S.typhimurium infection. May act as a positive regulator of endothelial cell apoptosis in response to blood flow-derived shear stress. The protein is p53 apoptosis effector related to PMP-22 of Homo sapiens (Human).